Reading from the N-terminus, the 247-residue chain is Carboxy-S-adenosyl-L-methionine synthase (247 aa).

S-adenosyl-L-methionine is bound by residues tyrosine 39, 64–66 (GCS), 89–90 (DN), 117–118 (DI), asparagine 132, and arginine 199.

This sequence belongs to the class I-like SAM-binding methyltransferase superfamily. Cx-SAM synthase family. Homodimer.

The enzyme catalyses prephenate + S-adenosyl-L-methionine = carboxy-S-adenosyl-L-methionine + 3-phenylpyruvate + H2O. Functionally, catalyzes the conversion of S-adenosyl-L-methionine (SAM) to carboxy-S-adenosyl-L-methionine (Cx-SAM). This is Carboxy-S-adenosyl-L-methionine synthase from Salmonella arizonae (strain ATCC BAA-731 / CDC346-86 / RSK2980).